We begin with the raw amino-acid sequence, 66 residues long: Alpha-bisabolene synthase (66 aa).

Belongs to the terpene synthase family. Tpsd subfamily. It depends on Mn(2+) as a cofactor. K(+) is required as a cofactor.

The protein resides in the cytoplasm. The catalysed reaction is (2E,6E)-farnesyl diphosphate = (E,R)-alpha-bisabolene + diphosphate. The protein operates within terpene metabolism; oleoresin biosynthesis. Involved in defensive oleoresin formation in conifers in response to insect attack or other injury. Involved in sesquiterpene (C15) olefins biosynthesis. In Pseudotsuga menziesii (Douglas-fir), this protein is Alpha-bisabolene synthase.